The following is a 126-amino-acid chain: Probable V-type proton ATPase subunit G (126 aa).

Residues 23-45 (NEARKRKLQRTKQAKQEAQAEVE) are disordered. Over residues 26 to 35 (RKRKLQRTKQ) the composition is skewed to basic residues.

It belongs to the V-ATPase G subunit family. As to quaternary structure, V-ATPase is a heteromultimeric enzyme made up of two complexes: the ATP-hydrolytic V1 complex and the proton translocation V0 complex. The V1 complex consists of three catalytic AB heterodimers that form a heterohexamer, three peripheral stalks each consisting of EG heterodimers, one central rotor including subunits D and F, and the regulatory subunits C and H. The proton translocation complex V0 consists of the proton transport subunit a, a ring of proteolipid subunits c9c'', rotary subunit d, subunits e and f, and the accessory subunits vah-19/Ac45 and vah-20/PRR.

In terms of biological role, subunit of the V1 complex of vacuolar(H+)-ATPase (V-ATPase), a multisubunit enzyme composed of a peripheral complex (V1) that hydrolyzes ATP and a membrane integral complex (V0) that translocates protons. V-ATPase is responsible for acidifying and maintaining the pH of intracellular compartments and in some cell types, is targeted to the plasma membrane, where it is responsible for acidifying the extracellular environment. In neurons, required for necrotic cell death by promoting intracellular acidification. In Caenorhabditis briggsae, this protein is Probable V-type proton ATPase subunit G.